The chain runs to 1510 residues: ABC transporter C family MRP4 (1510 aa).

The next 12 membrane-spanning stretches (helical) occupy residues 12-32 (EAVAATAHAALLALAALLLLL), 55-75 (PAVVVGDGAGGALAAATAGAW), 78-98 (AVLASCAYALLSQVAVLSYEV), 109-129 (ALLLPAVQAVSWAALLALALQ), 138-158 (FPALVRLWWVVSFALCVVIAY), 177-197 (MVANFASVPALGFLCLVGVMG), 319-339 (TFAAVNTIVSYVGPYLISYFV), 342-362 (LSGNIAFPHEGYILASIFFVA), 373-393 (WYLGVDIMGIHVKSGLTAMVY), 427-447 (AWYFHDIWMLPLQIILALAIL), 453-473 (IAMVSTLVATVLSIAASVPVA), and 540-560 (FVFWSSPIFVAVITFGTCILL). The ABC transmembrane type-1 1 domain occupies 320–595 (FAAVNTIVSY…FPDLISMMAQ (276 aa)). One can recognise an ABC transporter 1 domain in the interval 629–852 (VDIKDGAFSW…GTDFNALVSA (224 aa)). Residue 664–671 (GVIGSGKS) participates in ATP binding. Residues 889-925 (LKNKMCENGQPSNTRGIKEKKKKEERKKKRTVQEEER) are disordered. Residues 906-918 (KEKKKKEERKKKR) are compositionally biased toward basic residues. The next 6 helical transmembrane spans lie at 945–965 (GTLIPLIILAQTMFQVLQIAS), 985–1005 (SVVLLVVYMSLAFGSSLFVFM), 1060–1082 (IAFRLGGFASTTIQLLGIVAVMS), 1086–1108 (WQVLILIVPMAVACMWMQRYYIA), 1154–1174 (LLDCFARPLFSSLAAIEWLCL), and 1179–1199 (LSTFVFAFCMAILVSFPPGTI). The ABC transmembrane type-1 2 domain occupies 950-1220 (LIILAQTMFQ…GLNLNARMSR (271 aa)). One can recognise an ABC transporter 2 domain in the interval 1267–1501 (IELIDLKVRY…KSSMFIQLVS (235 aa)). Position 1301–1308 (1301–1308 (GRTGSGKS)) interacts with ATP.

This sequence belongs to the ABC transporter superfamily. ABCC family. Conjugate transporter (TC 3.A.1.208) subfamily. Expressed in roots, leaves, stalks, tassels, silks, developing seeds and developing embryos.

It localises to the membrane. ABC transporter that may affect phytic acid transport and compartmentalization. May function directly or indirectly in removing phytic acid from the cytosol or in vesicle trafficking. Required for phytic acid accumulation in developing seeds. Phytic acid is the primary storage form of phosphorus in cereal grains and other plant seeds. This chain is ABC transporter C family MRP4, found in Zea mays (Maize).